A 500-amino-acid polypeptide reads, in one-letter code: Pentatricopeptide repeat-containing protein At1g06580 (500 aa).

PPR repeat units lie at residues 78–112 (SIVD…GISH), 113–147 (DLYS…GFEP), 148–182 (SIVT…GYEP), 183–217 (NVVI…GIRP), 218–252 (DVVT…GISP), 253–287 (DVIT…SVNP), 288–322 (NIVT…GFFP), 323–357 (NAVT…GVDG), 358–392 (DTFT…GVHP), 393–427 (DMYT…KTVV), 428–462 (GIIT…GVSP), and 463–498 (DVIT…GLMP).

This sequence belongs to the PPR family. P subfamily.

The protein is Pentatricopeptide repeat-containing protein At1g06580 of Arabidopsis thaliana (Mouse-ear cress).